We begin with the raw amino-acid sequence, 230 residues long: Ureidoacrylate amidohydrolase RutB (230 aa).

Catalysis depends on Asp-24, which acts as the Proton acceptor. The active site involves Lys-133. Cys-166 functions as the Nucleophile in the catalytic mechanism.

It belongs to the isochorismatase family. RutB subfamily.

It carries out the reaction (Z)-3-ureidoacrylate + H2O + H(+) = (Z)-3-aminoacrylate + NH4(+) + CO2. It catalyses the reaction (Z)-3-ureidoacrylate + H2O = (Z)-3-aminoacrylate + carbamate + H(+). The enzyme catalyses (Z)-2-methylureidoacrylate + H2O + H(+) = (Z)-2-methylaminoacrylate + NH4(+) + CO2. Its function is as follows. Hydrolyzes ureidoacrylate to form aminoacrylate and carbamate. The carbamate hydrolyzes spontaneously, thereby releasing one of the nitrogen atoms of the pyrimidine ring as ammonia and one of its carbon atoms as CO2. The chain is Ureidoacrylate amidohydrolase RutB from Escherichia coli O103:H2 (strain 12009 / EHEC).